Consider the following 519-residue polypeptide: MNLPNLSLADFLPLLPAIIMVVGASILLLSEVFLSTTASRAYQAVLTVVTAVAAGAMALTTMFEPPQEVMLGFGVMDPFSSFLTFVVCVGLGLATLSSVSFLRKRGAERGEFYALMLFASAGMSLLAMSNELITLFVNIEVLSLSTYALTSYLRRGTRPSEAGFKYFILGAFSSAVLLYGAALLYGATGTTHLTAMAGPLSTAMSSQPGLVYAGIILVITGFAFKVAAVPFHMWTPDVYEGAPTPVTALMSVGVKAAAFAAMVRVFFMVGKGVDPQMLLGLFSVLAFLTMVAGNLLAIPQRNVKRMLAYSSIAHAGYLLVGVAALFVTGPGEQFRLLGASALTGGTPLGLARAEALRGILYYLLAYTFSAVGAFAIVSVLERREDEEKGTAWDLERFSGLAQRKPGWAFAMAAFMLSLGGIPPTIGFMSKLLIFQAAVDAGLIGLTIVGVLSSAVGIYYYLRVVVYMFMRPVPEGAQALEKSWSTELALVLSTAAVVILGIIPGPIMGWLEQASSIFGQ.

The next 13 helical transmembrane spans lie at 14–34 (LLPA…EVFL), 44–64 (AVLT…TMFE), 82–102 (FLTF…VSFL), 117–137 (LFAS…TLFV), 167–187 (FILG…LYGA), 209–229 (GLVY…VAAV), 249–269 (LMSV…FFMV), 278–298 (LLGL…LLAI), 307–327 (LAYS…ALFV), 359–379 (ILYY…IVSV), 407–427 (WAFA…TIGF), 431–451 (LLIF…VGVL), and 487–507 (LALV…GPIM).

Belongs to the complex I subunit 2 family. As to quaternary structure, NDH-1 is composed of 14 different subunits. Subunits NuoA, H, J, K, L, M, N constitute the membrane sector of the complex.

Its subcellular location is the cell inner membrane. The enzyme catalyses a quinone + NADH + 5 H(+)(in) = a quinol + NAD(+) + 4 H(+)(out). In terms of biological role, NDH-1 shuttles electrons from NADH, via FMN and iron-sulfur (Fe-S) centers, to quinones in the respiratory chain. The immediate electron acceptor for the enzyme in this species is believed to be ubiquinone. Couples the redox reaction to proton translocation (for every two electrons transferred, four hydrogen ions are translocated across the cytoplasmic membrane), and thus conserves the redox energy in a proton gradient. In Myxococcus xanthus (strain DK1622), this protein is NADH-quinone oxidoreductase subunit N.